Here is a 54-residue protein sequence, read N- to C-terminus: MAATDVRPKITLACQECKHRNYITRKNRRNTPDRLELRKYCPNCRTHREHRETR.

Belongs to the bacterial ribosomal protein bL33 family.

This is Large ribosomal subunit protein bL33 from Thermobifida fusca (strain YX).